Consider the following 547-residue polypeptide: RING finger protein ETP1 homolog (547 aa).

The RING-type zinc-finger motif lies at 208 to 248 (CVVCLERMDSSITGLITIVCQHTFHCPCLQKWGNSSCPVCR). The UBP-type; degenerate zinc finger occupies 245 to 338 (PVCRYTQKVQ…GKLVELSTDG (94 aa)). Zn(2+) contacts are provided by cysteine 262, cysteine 265, cysteine 274, cysteine 277, cysteine 282, histidine 289, histidine 293, and histidine 299. The span at 514 to 523 (LPNNSTVRSN) shows a compositional bias: polar residues. Residues 514–547 (LPNNSTVRSNSVKSKKKKKKKPVVPSSSGSLGTD) form a disordered region. Basic residues predominate over residues 526–535 (KSKKKKKKKP).

It localises to the cytoplasm. In terms of biological role, may act as a cytoplasmic retention protein with a role in regulating nuclear transport. The sequence is that of RING finger protein ETP1 homolog from Schizosaccharomyces pombe (strain 972 / ATCC 24843) (Fission yeast).